The primary structure comprises 125 residues: uncharacterized protein (125 aa).

Positions 19–73 constitute an HTH cro/C1-type domain; the sequence is IYSLRLAKGLSRQQLAEVIDVTHQQLQKYEKAINRISVGRLVLIAEALDRNIDYF. Positions 30-49 form a DNA-binding region, H-T-H motif; the sequence is RQQLAEVIDVTHQQLQKYEK.

This is an uncharacterized protein from Rickettsia conorii (strain ATCC VR-613 / Malish 7).